The primary structure comprises 242 residues: Probable transcriptional regulatory protein Cphy_2507 (242 aa).

Belongs to the TACO1 family.

The protein resides in the cytoplasm. This Lachnoclostridium phytofermentans (strain ATCC 700394 / DSM 18823 / ISDg) (Clostridium phytofermentans) protein is Probable transcriptional regulatory protein Cphy_2507.